The primary structure comprises 367 residues: Protein-glutamate methylesterase/protein-glutamine glutaminase 2 (367 aa).

In terms of domain architecture, Response regulatory spans 15–132 (RALIVDDSAL…SQSMHEMAEE (118 aa)). A 4-aspartylphosphate modification is found at Asp66. Residues 172–367 (KTSVRNVLAI…MADEIVKIVR (196 aa)) enclose the CheB-type methylesterase domain. Residues Ser184, His211, and Asp311 contribute to the active site.

Belongs to the CheB family. Phosphorylated by CheA. Phosphorylation of the N-terminal regulatory domain activates the methylesterase activity.

The protein resides in the cytoplasm. The enzyme catalyses [protein]-L-glutamate 5-O-methyl ester + H2O = L-glutamyl-[protein] + methanol + H(+). It carries out the reaction L-glutaminyl-[protein] + H2O = L-glutamyl-[protein] + NH4(+). Functionally, involved in chemotaxis. Part of a chemotaxis signal transduction system that modulates chemotaxis in response to various stimuli. Catalyzes the demethylation of specific methylglutamate residues introduced into the chemoreceptors (methyl-accepting chemotaxis proteins or MCP) by CheR. Also mediates the irreversible deamidation of specific glutamine residues to glutamic acid. This is Protein-glutamate methylesterase/protein-glutamine glutaminase 2 from Methanosarcina mazei (strain ATCC BAA-159 / DSM 3647 / Goe1 / Go1 / JCM 11833 / OCM 88) (Methanosarcina frisia).